Reading from the N-terminus, the 312-residue chain is Phosphoribosylaminoimidazole-succinocarboxamide synthase (312 aa).

It belongs to the SAICAR synthetase family.

It carries out the reaction 5-amino-1-(5-phospho-D-ribosyl)imidazole-4-carboxylate + L-aspartate + ATP = (2S)-2-[5-amino-1-(5-phospho-beta-D-ribosyl)imidazole-4-carboxamido]succinate + ADP + phosphate + 2 H(+). The protein operates within purine metabolism; IMP biosynthesis via de novo pathway; 5-amino-1-(5-phospho-D-ribosyl)imidazole-4-carboxamide from 5-amino-1-(5-phospho-D-ribosyl)imidazole-4-carboxylate: step 1/2. The chain is Phosphoribosylaminoimidazole-succinocarboxamide synthase from Legionella pneumophila (strain Lens).